Consider the following 148-residue polypeptide: Ubiquitin-conjugating enzyme E2 30 (148 aa).

In terms of domain architecture, UBC core spans 1 to 147 (MASKRINKEL…AQSWTQKYAM (147 aa)). The active-site Glycyl thioester intermediate is Cys85.

The protein belongs to the ubiquitin-conjugating enzyme family. In terms of assembly, interacts with RGLG3 and RGLG4. In terms of tissue distribution, ubiquitously expressed at very low levels.

It carries out the reaction S-ubiquitinyl-[E1 ubiquitin-activating enzyme]-L-cysteine + [E2 ubiquitin-conjugating enzyme]-L-cysteine = [E1 ubiquitin-activating enzyme]-L-cysteine + S-ubiquitinyl-[E2 ubiquitin-conjugating enzyme]-L-cysteine.. Its pathway is protein modification; protein ubiquitination. Accepts the ubiquitin from the E1 complex and catalyzes its covalent attachment to other proteins. This chain is Ubiquitin-conjugating enzyme E2 30 (UBC30), found in Arabidopsis thaliana (Mouse-ear cress).